The following is a 274-amino-acid chain: Small ribosomal subunit protein uS2 (274 aa).

The protein belongs to the universal ribosomal protein uS2 family.

The polypeptide is Small ribosomal subunit protein uS2 (Syntrophobacter fumaroxidans (strain DSM 10017 / MPOB)).